The sequence spans 159 residues: Protein Smg homolog (159 aa).

It belongs to the Smg family.

This chain is Protein Smg homolog, found in Nitrosococcus oceani (strain ATCC 19707 / BCRC 17464 / JCM 30415 / NCIMB 11848 / C-107).